Here is a 146-residue protein sequence, read N- to C-terminus: Hemoglobin subunit beta-1 (146 aa).

The Globin domain maps to 2–146 (HWTAEEKSAI…VAHALAHRYH (145 aa)). Heme b-binding residues include His-63 and His-92.

Belongs to the globin family. In terms of assembly, heterotetramer of two alpha chains and two beta chains. Red blood cells.

Functionally, involved in oxygen transport from the lung to the various peripheral tissues. This Drymarchon melanurus erebennus (Texas indigo snake) protein is Hemoglobin subunit beta-1.